Consider the following 76-residue polypeptide: Acyl carrier protein (76 aa).

Positions 1–76 (MSIEERVKKI…SAIDYVQNNQ (76 aa)) constitute a Carrier domain. At S36 the chain carries O-(pantetheine 4'-phosphoryl)serine.

This sequence belongs to the acyl carrier protein (ACP) family. Post-translationally, 4'-phosphopantetheine is transferred from CoA to a specific serine of apo-ACP by AcpS. This modification is essential for activity because fatty acids are bound in thioester linkage to the sulfhydryl of the prosthetic group.

The protein resides in the cytoplasm. It participates in lipid metabolism; fatty acid biosynthesis. Carrier of the growing fatty acid chain in fatty acid biosynthesis. This Haemophilus influenzae (strain 86-028NP) protein is Acyl carrier protein.